We begin with the raw amino-acid sequence, 100 residues long: Large ribosomal subunit protein uL23 (100 aa).

This sequence belongs to the universal ribosomal protein uL23 family. In terms of assembly, part of the 50S ribosomal subunit. Contacts protein L29, and trigger factor when it is bound to the ribosome.

One of the early assembly proteins it binds 23S rRNA. One of the proteins that surrounds the polypeptide exit tunnel on the outside of the ribosome. Forms the main docking site for trigger factor binding to the ribosome. This chain is Large ribosomal subunit protein uL23, found in Shewanella frigidimarina (strain NCIMB 400).